The following is a 575-amino-acid chain: Proline--tRNA ligase (575 aa).

This sequence belongs to the class-II aminoacyl-tRNA synthetase family. ProS type 1 subfamily. In terms of assembly, homodimer.

It is found in the cytoplasm. It catalyses the reaction tRNA(Pro) + L-proline + ATP = L-prolyl-tRNA(Pro) + AMP + diphosphate. Catalyzes the attachment of proline to tRNA(Pro) in a two-step reaction: proline is first activated by ATP to form Pro-AMP and then transferred to the acceptor end of tRNA(Pro). As ProRS can inadvertently accommodate and process non-cognate amino acids such as alanine and cysteine, to avoid such errors it has two additional distinct editing activities against alanine. One activity is designated as 'pretransfer' editing and involves the tRNA(Pro)-independent hydrolysis of activated Ala-AMP. The other activity is designated 'posttransfer' editing and involves deacylation of mischarged Ala-tRNA(Pro). The misacylated Cys-tRNA(Pro) is not edited by ProRS. The sequence is that of Proline--tRNA ligase from Solidesulfovibrio magneticus (strain ATCC 700980 / DSM 13731 / RS-1) (Desulfovibrio magneticus).